The following is a 139-amino-acid chain: Nucleoside diphosphate kinase (139 aa).

Residues K9, F57, R85, T91, R102, and N112 each contribute to the ATP site. H115 functions as the Pros-phosphohistidine intermediate in the catalytic mechanism.

Belongs to the NDK family. Homotetramer. Mg(2+) is required as a cofactor.

It is found in the cytoplasm. The enzyme catalyses a 2'-deoxyribonucleoside 5'-diphosphate + ATP = a 2'-deoxyribonucleoside 5'-triphosphate + ADP. It catalyses the reaction a ribonucleoside 5'-diphosphate + ATP = a ribonucleoside 5'-triphosphate + ADP. Major role in the synthesis of nucleoside triphosphates other than ATP. The ATP gamma phosphate is transferred to the NDP beta phosphate via a ping-pong mechanism, using a phosphorylated active-site intermediate. This is Nucleoside diphosphate kinase from Exiguobacterium sp. (strain ATCC BAA-1283 / AT1b).